A 79-amino-acid chain; its full sequence is DNA-directed RNA polymerase subunit omega (79 aa).

The protein belongs to the RNA polymerase subunit omega family. The RNAP catalytic core consists of 2 alpha, 1 beta, 1 beta' and 1 omega subunit. When a sigma factor is associated with the core the holoenzyme is formed, which can initiate transcription.

The enzyme catalyses RNA(n) + a ribonucleoside 5'-triphosphate = RNA(n+1) + diphosphate. Functionally, promotes RNA polymerase assembly. Latches the N- and C-terminal regions of the beta' subunit thereby facilitating its interaction with the beta and alpha subunits. The protein is DNA-directed RNA polymerase subunit omega of Kosmotoga olearia (strain ATCC BAA-1733 / DSM 21960 / TBF 19.5.1).